A 105-amino-acid polypeptide reads, in one-letter code: MFFDLYEIILYILFFCVIFYGFLSFIELFYYLRDPRKRKKIIYIIIYIFCFLILMYILLIMDSYFIVNIIEFYQKYENGFKFFDNINRVILMHLEKGFNFFKSLF.

The protein resides in the plastid. This is an uncharacterized protein from Euglena longa (Euglenophycean alga).